The primary structure comprises 122 residues: Large ribosomal subunit protein bL12 (122 aa).

Belongs to the bacterial ribosomal protein bL12 family. Homodimer. Part of the ribosomal stalk of the 50S ribosomal subunit. Forms a multimeric L10(L12)X complex, where L10 forms an elongated spine to which 2 to 4 L12 dimers bind in a sequential fashion. Binds GTP-bound translation factors.

Functionally, forms part of the ribosomal stalk which helps the ribosome interact with GTP-bound translation factors. Is thus essential for accurate translation. This chain is Large ribosomal subunit protein bL12, found in Staphylococcus aureus (strain Mu50 / ATCC 700699).